The chain runs to 401 residues: S-adenosylmethionine synthase (401 aa).

137 to 142 (GQGSGD) lines the ATP pocket.

It belongs to the AdoMet synthase 2 family. Mg(2+) is required as a cofactor.

The catalysed reaction is L-methionine + ATP + H2O = S-adenosyl-L-methionine + phosphate + diphosphate. Its pathway is amino-acid biosynthesis; S-adenosyl-L-methionine biosynthesis; S-adenosyl-L-methionine from L-methionine: step 1/1. Functionally, catalyzes the formation of S-adenosylmethionine from methionine and ATP. The sequence is that of S-adenosylmethionine synthase from Haloquadratum walsbyi (strain DSM 16790 / HBSQ001).